Here is a 224-residue protein sequence, read N- to C-terminus: NADH-quinone oxidoreductase subunit B (224 aa).

Positions 67, 68, 133, and 162 each coordinate [4Fe-4S] cluster. Positions 200–224 (DMPAEKDRKRGERIKVTNLRTPDEI) are disordered. Over residues 201-224 (MPAEKDRKRGERIKVTNLRTPDEI) the composition is skewed to basic and acidic residues.

Belongs to the complex I 20 kDa subunit family. In terms of assembly, NDH-1 is composed of 14 different subunits. Subunits NuoB, C, D, E, F, and G constitute the peripheral sector of the complex. It depends on [4Fe-4S] cluster as a cofactor.

It localises to the cell inner membrane. The catalysed reaction is a quinone + NADH + 5 H(+)(in) = a quinol + NAD(+) + 4 H(+)(out). Functionally, NDH-1 shuttles electrons from NADH, via FMN and iron-sulfur (Fe-S) centers, to quinones in the respiratory chain. The immediate electron acceptor for the enzyme in this species is believed to be ubiquinone. Couples the redox reaction to proton translocation (for every two electrons transferred, four hydrogen ions are translocated across the cytoplasmic membrane), and thus conserves the redox energy in a proton gradient. In Aeromonas salmonicida (strain A449), this protein is NADH-quinone oxidoreductase subunit B.